Reading from the N-terminus, the 280-residue chain is Energy-coupling factor transporter ATP-binding protein EcfA2 (280 aa).

The ABC transporter domain maps to 3–245 (INLQNVSYTY…VSLLEKKQLG (243 aa)). 40-47 (GHTGSGKS) is a binding site for ATP.

Belongs to the ABC transporter superfamily. Energy-coupling factor EcfA family. As to quaternary structure, forms a stable energy-coupling factor (ECF) transporter complex composed of 2 membrane-embedded substrate-binding proteins (S component), 2 ATP-binding proteins (A component) and 2 transmembrane proteins (T component).

It is found in the cell membrane. Its function is as follows. ATP-binding (A) component of a common energy-coupling factor (ECF) ABC-transporter complex. Unlike classic ABC transporters this ECF transporter provides the energy necessary to transport a number of different substrates. The polypeptide is Energy-coupling factor transporter ATP-binding protein EcfA2 (Streptococcus pyogenes serotype M3 (strain ATCC BAA-595 / MGAS315)).